The sequence spans 230 residues: Porin OmpL (230 aa).

A signal peptide spans 1-20 (MKKINAIILLSSLTSASVFA).

Belongs to the oligogalacturonate-specific porin KdgM (TC 1.B.35) family. OmpL subfamily.

Its subcellular location is the cell outer membrane. Functionally, outer membrane channel protein that allows an efficient diffusion of low-molecular-weight solutes such as small sugars and tetraglycine. However, the specific substrate recognized by the OmpL channel is unknown. This chain is Porin OmpL (ompL), found in Escherichia coli (strain K12).